A 211-amino-acid chain; its full sequence is Endonuclease V (211 aa).

2 residues coordinate Mg(2+): Asp-31 and Glu-95. Residues 182-211 (IYEVKNTPSPNRSRKKRGNRGKDNNNSQGN) form a disordered region.

It belongs to the endonuclease V family. Requires Mg(2+) as cofactor.

It is found in the cytoplasm. It catalyses the reaction Endonucleolytic cleavage at apurinic or apyrimidinic sites to products with a 5'-phosphate.. In terms of biological role, DNA repair enzyme involved in the repair of deaminated bases. Selectively cleaves double-stranded DNA at the second phosphodiester bond 3' to a deoxyinosine leaving behind the intact lesion on the nicked DNA. This Pyrococcus horikoshii (strain ATCC 700860 / DSM 12428 / JCM 9974 / NBRC 100139 / OT-3) protein is Endonuclease V.